We begin with the raw amino-acid sequence, 143 residues long: Transcriptional regulator MraZ (143 aa).

SpoVT-AbrB domains are found at residues 5 to 47 (EYEH…PRSV) and 76 to 119 (AADM…APRR).

Belongs to the MraZ family. In terms of assembly, forms oligomers.

Its subcellular location is the cytoplasm. The protein localises to the nucleoid. This is Transcriptional regulator MraZ from Roseiflexus sp. (strain RS-1).